A 409-amino-acid polypeptide reads, in one-letter code: Divalent metal cation transporter MntH (409 aa).

Transmembrane regions (helical) follow at residues 19 to 39 (LSLM…GNFA), 46 to 66 (ASFG…AMLI), 98 to 118 (WVQA…GAAI), 122 to 142 (LLLG…TFLI), 155 to 175 (LVIG…LVFS), 196 to 216 (AVFL…IYLH), 241 to 261 (IAMT…AAAF), 290 to 310 (IFGL…TLAG), 320 to 340 (FYIP…IVIL), 348 to 368 (ILVM…VPLL), and 388 to 408 (ILGK…LVSL).

It belongs to the NRAMP family.

The protein localises to the cell inner membrane. In terms of biological role, h(+)-stimulated, divalent metal cation uptake system. This is Divalent metal cation transporter MntH from Yersinia enterocolitica serotype O:8 / biotype 1B (strain NCTC 13174 / 8081).